Consider the following 89-residue polypeptide: Small ribosomal subunit protein uS15 (89 aa).

The span at 1–13 (MTISKERKEEVIS) shows a compositional bias: basic and acidic residues. Positions 1 to 24 (MTISKERKEEVISEHGAAAGDTGS) are disordered.

This sequence belongs to the universal ribosomal protein uS15 family. As to quaternary structure, part of the 30S ribosomal subunit. Forms a bridge to the 50S subunit in the 70S ribosome, contacting the 23S rRNA.

Its function is as follows. One of the primary rRNA binding proteins, it binds directly to 16S rRNA where it helps nucleate assembly of the platform of the 30S subunit by binding and bridging several RNA helices of the 16S rRNA. Functionally, forms an intersubunit bridge (bridge B4) with the 23S rRNA of the 50S subunit in the ribosome. The protein is Small ribosomal subunit protein uS15 of Rhodopirellula baltica (strain DSM 10527 / NCIMB 13988 / SH1).